Here is a 235-residue protein sequence, read N- to C-terminus: Rab-like protein 3 (235 aa).

Positions 1-235 (MASLDRVKVL…GGNFKSLHYD (235 aa)) are small GTPase-like. Residues 16–21 (GVGKSS), 148–150 (KLD), and 179–180 (DC) each bind GTP.

It belongs to the small GTPase superfamily. Rab family. Homodimer.

Functionally, required for KRAS signaling regulation and modulation of cell proliferation. Regulator of KRAS prenylation, and probably prenylation of other small GTPases. Required for lymphocyte development and function. Not required for myeloid cell development. This is Rab-like protein 3 (rabl3) from Xenopus tropicalis (Western clawed frog).